The following is a 136-amino-acid chain: Group 1 truncated hemoglobin GlbN (136 aa).

Histidine 81 contributes to the heme binding site.

Belongs to the truncated hemoglobin family. Group I subfamily. Homodimer. Requires heme as cofactor.

Its function is as follows. Binds oxygen cooperatively with very high affinity because of a fast combination and a slow dissociation rate. The polypeptide is Group 1 truncated hemoglobin GlbN (glbN) (Mycolicibacterium paratuberculosis (strain ATCC BAA-968 / K-10) (Mycobacterium paratuberculosis)).